A 319-amino-acid polypeptide reads, in one-letter code: Type II methyltransferase M.RsrI (319 aa).

Residues 1-10 (MANRSHHNAG) are compositionally biased toward basic residues. Residues 1 to 32 (MANRSHHNAGHRAMNALRKSGQKHSSESQLGS) form a disordered region.

This sequence belongs to the N(4)/N(6)-methyltransferase family.

It carries out the reaction a 2'-deoxyadenosine in DNA + S-adenosyl-L-methionine = an N(6)-methyl-2'-deoxyadenosine in DNA + S-adenosyl-L-homocysteine + H(+). Strongly inhibited by N-ethylmaleimide, inactivated by MgCl(2) or MgSO(4). Its function is as follows. A beta subtype methylase, recognizes the double-stranded sequence 5'-GAATTC-3', methylates A-3 on both strands, and protects the DNA from cleavage by the RsrI endonuclease. This chain is Type II methyltransferase M.RsrI, found in Cereibacter sphaeroides (Rhodobacter sphaeroides).